The following is a 225-amino-acid chain: UPF0758 protein Swoo_4561 (225 aa).

The MPN domain occupies 102–224; that stretch reads ILSDPDLTRD…IVSFAERGWI (123 aa). Histidine 173, histidine 175, and aspartate 186 together coordinate Zn(2+). Residues 173–186 carry the JAMM motif motif; it reads HNHPSGVAEPSHAD.

It belongs to the UPF0758 family.

The protein is UPF0758 protein Swoo_4561 of Shewanella woodyi (strain ATCC 51908 / MS32).